A 190-amino-acid polypeptide reads, in one-letter code: Vascular endothelial growth factor A (190 aa).

An N-terminal signal peptide occupies residues 1–26 (MNFLLSWVHWSLALLLYLHHAKWSQA). Cystine bridges form between cysteine 51/cysteine 93, cysteine 82/cysteine 127, and cysteine 86/cysteine 129. Asparagine 100 carries an N-linked (GlcNAc...) asparagine glycan.

This sequence belongs to the PDGF/VEGF growth factor family. As to quaternary structure, homodimer; disulfide-linked. Also found as heterodimer with PGF. Interacts with NRP1. Interacts with isoform 2 of BSG. Interacts with CD82; this interaction inhibits VEGFA-mediated signaling pathway.

It is found in the secreted. Functionally, growth factor active in angiogenesis, vasculogenesis and endothelial cell growth. Induces endothelial cell proliferation, promotes cell migration, inhibits apoptosis and induces permeabilization of blood vessels. Binds to the FLT1/VEGFR1 and KDR/VEGFR2 receptors, heparan sulfate and heparin. Binding to NRP1 receptor initiates a signaling pathway needed for motor neuron axon guidance and cell body migration, including for the caudal migration of facial motor neurons from rhombomere 4 to rhombomere 6 during embryonic development. Also binds the DEAR/FBXW7-AS1 receptor. In Equus caballus (Horse), this protein is Vascular endothelial growth factor A (VEGFA).